We begin with the raw amino-acid sequence, 157 residues long: Root allergen protein (157 aa).

Belongs to the BetVI family.

This Taraxacum officinale (Common dandelion) protein is Root allergen protein.